The following is a 329-amino-acid chain: Small ribosomal subunit protein uS2 (329 aa).

Belongs to the universal ribosomal protein uS2 family.

The sequence is that of Small ribosomal subunit protein uS2 from Bradyrhizobium sp. (strain ORS 278).